Here is a 580-residue protein sequence, read N- to C-terminus: WD repeat-containing protein 46 (580 aa).

The segment at 34-108 is disordered; it reads SWKEYKKMKQ…QQEKMKVTKD (75 aa). Basic and acidic residues-rich tracts occupy residues 64–85 and 98–108; these read TEGR…HDTG and LQQEKMKVTKD. WD repeat units lie at residues 193–234, 235–272, 274–312, 315–354, 357–396, and 399–436; these read AALD…YTYV, YDNL…NSFL, YVDV…HTNG, SLWS…GLDR, RIWD…NHVQ, and RGMH…IGHA.

In terms of assembly, part of the small subunit (SSU) processome.

Its subcellular location is the nucleus. It is found in the nucleolus. Functionally, scaffold component of the nucleolar structure. Part of the small subunit (SSU) processome, first precursor of the small eukaryotic ribosomal subunit. Required for 18S rRNA processing. Plays a role in negative regulation of detoxification genes by inhibiting protein levels of transcription factor skn-1, leading to down-regulation of skn-1 target genes. The sequence is that of WD repeat-containing protein 46 from Caenorhabditis elegans.